The chain runs to 312 residues: DNA-directed RNA polymerase subunit alpha (312 aa).

The alpha N-terminal domain (alpha-NTD) stretch occupies residues 1-229 (MLQYQIDRIE…ELFQPLATVT (229 aa)). The tract at residues 239-312 (EPSAEAQIPL…ISIPQSRTSA (74 aa)) is alpha C-terminal domain (alpha-CTD).

Belongs to the RNA polymerase alpha chain family. As to quaternary structure, in cyanobacteria the RNAP catalytic core is composed of 2 alpha, 1 beta, 1 beta', 1 gamma and 1 omega subunit. When a sigma factor is associated with the core the holoenzyme is formed, which can initiate transcription.

The enzyme catalyses RNA(n) + a ribonucleoside 5'-triphosphate = RNA(n+1) + diphosphate. Its function is as follows. DNA-dependent RNA polymerase catalyzes the transcription of DNA into RNA using the four ribonucleoside triphosphates as substrates. The polypeptide is DNA-directed RNA polymerase subunit alpha (Synechococcus sp. (strain CC9605)).